The sequence spans 593 residues: Tyrosine-protein phosphatase non-receptor type 11 (593 aa).

An N-acetylthreonine modification is found at Thr-2. SH2 domains follow at residues 6–102 (WFHP…KYPL) and 112–216 (WFHG…KQPL). A phosphotyrosine mark is found at Tyr-62 and Tyr-66. A Tyrosine-protein phosphatase domain is found at 247–517 (FWEEFETLQQ…EAQYRFIYMA (271 aa)). Substrate contacts are provided by residues Asp-425, 459 to 465 (CSAGIGR), and Gln-506. Residue Cys-459 is the Phosphocysteine intermediate of the active site. A phosphotyrosine; by PDGFR mark is found at Tyr-542 and Tyr-580.

Belongs to the protein-tyrosine phosphatase family. Non-receptor class 2 subfamily. As to quaternary structure, interacts with phosphorylated SIT1, LIME1, BCAR3 and MZPL1. Interacts with FCRL4, FCRL6, ANKHD1, SHB, INPP5D/SHIP1 and CD84. Interacts with MILR1 (tyrosine-phosphorylated). Interacts with FLT1 (tyrosine-phosphorylated), FLT3 (tyrosine-phosphorylated), FLT4 (tyrosine-phosphorylated), KIT and GRB2. Interacts with PTPNS1. Interacts with KIR2DL1; the interaction is enhanced by ARRB2. Interacts (via SH2 domain) with TEK/TIE2 (tyrosine phosphorylated). Interacts with GAB2. Interacts with TERT; the interaction retains TERT in the nucleus. Interacts with PECAM1 and FER. Interacts with EPHA2 (activated); participates in PTK2/FAK1 dephosphorylation in EPHA2 downstream signaling. Interacts with PDGFRA (tyrosine phosphorylated). Interacts with PDGFRB (tyrosine phosphorylated); this interaction increases the PTPN11 phosphatase activity. Interacts with ROS1; this mediates PTPN11 phosphorylation. Interacts with CEACAM1 (via cytoplasmic domain); this interaction depends on the monomer/dimer equilibrium and is phosphorylation-dependent. Interacts with MPIG6B (via ITIM motif). Interacts with SIGLEC10. Interacts with CLEC12B (via ITIM motif); this interaction triggers dephosphorylation and activation of PTPN11. Interacts (via SH2 domains) with NEDD9/CAS-L; the interaction is enhanced when NEDD9/CAS-L is tyrosine phosphorylated. Phosphorylated on Tyr-542 and Tyr-580 upon receptor protein tyrosine kinase activation; which creates a binding site for GRB2 and other SH2-containing proteins. Phosphorylated upon activation of the receptor-type kinase FLT3. Phosphorylated upon activation of the receptor-type kinase PDGFRA. Phosphorylated by activated PDGFRB. As to expression, expressed in brain, muscle and lung.

Its subcellular location is the cytoplasm. The enzyme catalyses O-phospho-L-tyrosyl-[protein] + H2O = L-tyrosyl-[protein] + phosphate. With respect to regulation, inhibited by orthovanadate, molybdate and spermidine. Functionally, acts downstream of various receptor and cytoplasmic protein tyrosine kinases to participate in the signal transduction from the cell surface to the nucleus. Positively regulates MAPK signal transduction pathway. Dephosphorylates GAB1, ARHGAP35 and EGFR. Dephosphorylates ROCK2 at 'Tyr-722' resulting in stimulation of its RhoA binding activity. Dephosphorylates CDC73. Dephosphorylates SOX9 on tyrosine residues, leading to inactivate SOX9 and promote ossification. Dephosphorylates tyrosine-phosphorylated NEDD9/CAS-L. This is Tyrosine-protein phosphatase non-receptor type 11 (Ptpn11) from Rattus norvegicus (Rat).